Consider the following 120-residue polypeptide: Probable early E4 13 kDa protein (120 aa).

The sequence is that of Probable early E4 13 kDa protein from Human adenovirus A serotype 12 (HAdV-12).